A 68-amino-acid polypeptide reads, in one-letter code: Small ribosomal subunit protein bS21 (68 aa).

Belongs to the bacterial ribosomal protein bS21 family.

This Ruegeria pomeroyi (strain ATCC 700808 / DSM 15171 / DSS-3) (Silicibacter pomeroyi) protein is Small ribosomal subunit protein bS21.